The following is a 198-amino-acid chain: Myb-related protein 340 (198 aa).

2 HTH myb-type domains span residues 10-62 (DVEV…LNYL) and 63-117 (RPDV…IQKH). 2 DNA-binding regions (H-T-H motif) span residues 38 to 62 (WNTI…LNYL) and 90 to 113 (WSKI…NRTR).

As to expression, expressed only in flowers.

The protein localises to the nucleus. Functionally, transcription factor. This chain is Myb-related protein 340, found in Antirrhinum majus (Garden snapdragon).